Consider the following 376-residue polypeptide: Queuine tRNA-ribosyltransferase (376 aa).

Asp-89 functions as the Proton acceptor in the catalytic mechanism. Substrate contacts are provided by residues 89–93, Asp-143, Gln-194, and Gly-221; that span reads DSGGF. The segment at 252–258 is RNA binding; that stretch reads GVGIPSN. The Nucleophile role is filled by Asp-271. Residues 276–280 are RNA binding; important for wobble base 34 recognition; it reads ARNGR. Zn(2+) is bound by residues Cys-309, Cys-311, Cys-314, and His-340.

It belongs to the queuine tRNA-ribosyltransferase family. In terms of assembly, homodimer. Within each dimer, one monomer is responsible for RNA recognition and catalysis, while the other monomer binds to the replacement base PreQ1. Requires Zn(2+) as cofactor.

It carries out the reaction 7-aminomethyl-7-carbaguanine + guanosine(34) in tRNA = 7-aminomethyl-7-carbaguanosine(34) in tRNA + guanine. The protein operates within tRNA modification; tRNA-queuosine biosynthesis. Its function is as follows. Catalyzes the base-exchange of a guanine (G) residue with the queuine precursor 7-aminomethyl-7-deazaguanine (PreQ1) at position 34 (anticodon wobble position) in tRNAs with GU(N) anticodons (tRNA-Asp, -Asn, -His and -Tyr). Catalysis occurs through a double-displacement mechanism. The nucleophile active site attacks the C1' of nucleotide 34 to detach the guanine base from the RNA, forming a covalent enzyme-RNA intermediate. The proton acceptor active site deprotonates the incoming PreQ1, allowing a nucleophilic attack on the C1' of the ribose to form the product. After dissociation, two additional enzymatic reactions on the tRNA convert PreQ1 to queuine (Q), resulting in the hypermodified nucleoside queuosine (7-(((4,5-cis-dihydroxy-2-cyclopenten-1-yl)amino)methyl)-7-deazaguanosine). In Clostridium botulinum (strain Okra / Type B1), this protein is Queuine tRNA-ribosyltransferase.